The sequence spans 325 residues: NADH-quinone oxidoreductase subunit H (325 aa).

Helical transmembrane passes span 11–31, 81–101, 114–134, 154–174, 186–206, 237–257, 265–285, and 304–324; these read ILIS…CGAF, AIFT…FAIV, IGIL…LFAG, LSYE…AGSF, VWNV…GVAV, FFVG…TLFF, LPPF…FILI, and VCLP…LYNA.

The protein belongs to the complex I subunit 1 family. NDH-1 is composed of 13 different subunits. Subunits NuoA, H, J, K, L, M, N constitute the membrane sector of the complex.

It localises to the cell inner membrane. The enzyme catalyses a quinone + NADH + 5 H(+)(in) = a quinol + NAD(+) + 4 H(+)(out). In terms of biological role, NDH-1 shuttles electrons from NADH, via FMN and iron-sulfur (Fe-S) centers, to quinones in the respiratory chain. The immediate electron acceptor for the enzyme in this species is believed to be ubiquinone. Couples the redox reaction to proton translocation (for every two electrons transferred, four hydrogen ions are translocated across the cytoplasmic membrane), and thus conserves the redox energy in a proton gradient. This subunit may bind ubiquinone. This is NADH-quinone oxidoreductase subunit H from Yersinia pseudotuberculosis serotype O:1b (strain IP 31758).